We begin with the raw amino-acid sequence, 171 residues long: 3-hydroxydecanoyl-[acyl-carrier-protein] dehydratase (171 aa).

The active site involves His70.

This sequence belongs to the thioester dehydratase family. FabA subfamily. Homodimer.

The protein localises to the cytoplasm. The catalysed reaction is a (3R)-hydroxyacyl-[ACP] = a (2E)-enoyl-[ACP] + H2O. It carries out the reaction (3R)-hydroxydecanoyl-[ACP] = (2E)-decenoyl-[ACP] + H2O. The enzyme catalyses (2E)-decenoyl-[ACP] = (3Z)-decenoyl-[ACP]. The protein operates within lipid metabolism; fatty acid biosynthesis. In terms of biological role, necessary for the introduction of cis unsaturation into fatty acids. Catalyzes the dehydration of (3R)-3-hydroxydecanoyl-ACP to E-(2)-decenoyl-ACP and then its isomerization to Z-(3)-decenoyl-ACP. Can catalyze the dehydratase reaction for beta-hydroxyacyl-ACPs with saturated chain lengths up to 16:0, being most active on intermediate chain length. The polypeptide is 3-hydroxydecanoyl-[acyl-carrier-protein] dehydratase (Shewanella frigidimarina (strain NCIMB 400)).